Consider the following 377-residue polypeptide: Citrate synthase (377 aa).

Catalysis depends on residues His258 and Asp313.

It belongs to the citrate synthase family. Homodimer. Post-translationally, the N-terminus is blocked by acetylation.

The enzyme catalyses oxaloacetate + acetyl-CoA + H2O = citrate + CoA + H(+). It participates in carbohydrate metabolism; tricarboxylic acid cycle; isocitrate from oxaloacetate: step 1/2. With respect to regulation, allosterically inhibited by NADH. The polypeptide is Citrate synthase (gltA) (Saccharolobus solfataricus (strain ATCC 35092 / DSM 1617 / JCM 11322 / P2) (Sulfolobus solfataricus)).